We begin with the raw amino-acid sequence, 1220 residues long: Post-transcriptional regulator MKT1L (1220 aa).

Positions 1-107 are disordered; the sequence is MRKAGANRNN…SPWNSPPQQT (107 aa). Basic residues predominate over residues 34-70; the sequence is PHHHQHQHHHQHQHQHQHQHQHPHQHPHQHHHHHPHH.

It belongs to the XPG/RAD2 endonuclease family. Forms a complex composed of at least MKT1L, PBP1, XAC1 and LSM12.

The protein resides in the cytoplasm. In terms of biological role, involved in post-transcriptional regulation of gene expression. This chain is Post-transcriptional regulator MKT1L, found in Trypanosoma brucei brucei (strain 927/4 GUTat10.1).